The following is a 426-amino-acid chain: Enolase (426 aa).

Glutamine 163 serves as a coordination point for (2R)-2-phosphoglycerate. Residue glutamate 205 is the Proton donor of the active site. Mg(2+) is bound by residues aspartate 242, glutamate 286, and aspartate 313. Positions 338, 367, 368, and 389 each coordinate (2R)-2-phosphoglycerate. Lysine 338 (proton acceptor) is an active-site residue.

It belongs to the enolase family. It depends on Mg(2+) as a cofactor.

It is found in the cytoplasm. The protein resides in the secreted. Its subcellular location is the cell surface. It catalyses the reaction (2R)-2-phosphoglycerate = phosphoenolpyruvate + H2O. It participates in carbohydrate degradation; glycolysis; pyruvate from D-glyceraldehyde 3-phosphate: step 4/5. Its function is as follows. Catalyzes the reversible conversion of 2-phosphoglycerate (2-PG) into phosphoenolpyruvate (PEP). It is essential for the degradation of carbohydrates via glycolysis. This Helicobacter acinonychis (strain Sheeba) protein is Enolase.